The chain runs to 488 residues: GlcNAc-binding protein A (488 aa).

An N-terminal signal peptide occupies residues 1–24 (MIMIITKKTLLPVTLALFSSGVMA). The Chitin-binding type-4 domain occupies 25–202 (HGYVSSVEGG…SFYNVIDVMF (178 aa)). Positions 439–480 (AGSKVLATDGRIYECKPFPYSGYCIQWSPSATQFEPGVGSDW) constitute a Chitin-binding type-3 domain.

This sequence belongs to the GbpA family.

It is found in the secreted. Functionally, probably interacts with GlcNAc residues. May promote attachment to both epithelial cell surfaces and chitin. This chain is GlcNAc-binding protein A, found in Photobacterium profundum (strain SS9).